Reading from the N-terminus, the 265-residue chain is Pancreas transcription factor 1 subunit alpha (265 aa).

The bHLH domain occupies Gln115–Leu167.

It is found in the nucleus. Transcription factor implicated in the cell fate determination in various organs. Binds to the E-box consensus sequence 5'-CANNTG-3'. Required for exocrine pancreatic development. Plays a central role in directing the differentiation of retinal progenitors towards horizontal and amacrine fates. This chain is Pancreas transcription factor 1 subunit alpha (ptf1a), found in Danio rerio (Zebrafish).